The sequence spans 368 residues: MSASSRGAALLRSQQRSICLQCRNQTRVLAPAGVTSAPRRFYSAEASATATATATATTTTTLPPPHPPVTTSTGTHAATSTSSQIYRIKSGVILTRPPLLTRDLTPFEESFYFYQKRLNERLTAPFRKDFYFKKDTAADLDWRIKLKERHGVPAKDIGRYNPRGRMAWNDEVLVGSQTSSRKHMVEKLLADAEMRVSEDGEEIPAEDRVPVEKPMPRRTEADEKGDVKRLDRALDKTLYLVVKKKADKEGEEAKWMFPTGVVPTDEGLHETAARILAESAGVNMNTWIVGRVPVAHHVVRPVFGQKDGALLKKGEKIFFLKGRIMAGQADLTDNLHDLVDFKWLTQEELRSTLAEEYFHSVKGMFAER.

The interval 53-81 (TATATTTTTLPPPHPPVTTSTGTHAATST) is disordered. A compositionally biased stretch (low complexity) spans 69–81 (VTTSTGTHAATST).

The protein belongs to the mitochondrion-specific ribosomal protein mL46 family. Component of the mitochondrial large ribosomal subunit (mt-LSU). Mature N.crassa 74S mitochondrial ribosomes consist of a small (37S) and a large (54S) subunit. The 37S small subunit contains a 16S ribosomal RNA (16S mt-rRNA) and 32 different proteins. The 54S large subunit contains a 23S rRNA (23S mt-rRNA) and 42 different proteins.

Its subcellular location is the mitochondrion. In terms of biological role, component of the mitochondrial ribosome (mitoribosome), a dedicated translation machinery responsible for the synthesis of mitochondrial genome-encoded proteins, including at least some of the essential transmembrane subunits of the mitochondrial respiratory chain. The mitoribosomes are attached to the mitochondrial inner membrane and translation products are cotranslationally integrated into the membrane. The chain is Large ribosomal subunit protein mL46 (mrpl17) from Neurospora crassa (strain ATCC 24698 / 74-OR23-1A / CBS 708.71 / DSM 1257 / FGSC 987).